Reading from the N-terminus, the 662-residue chain is Probable lysophospholipase 3 (662 aa).

The first 19 residues, 1–19 (MLFNCFGILALLQILPALA), serve as a signal peptide directing secretion. Residues Asn74, Asn127, Asn162, Asn196, Asn266, Asn274, Asn303, Asn376, Asn406, Asn411, Asn483, Asn518, Asn523, Asn547, Asn556, Asn574, Asn596, and Asn613 are each glycosylated (N-linked (GlcNAc...) asparagine). The 542-residue stretch at 76–617 (TCPSDYMLRP…EQYCWNGTTV (542 aa)) folds into the PLA2c domain.

It belongs to the lysophospholipase family.

The protein localises to the secreted. The enzyme catalyses a 1-acyl-sn-glycero-3-phosphocholine + H2O = sn-glycerol 3-phosphocholine + a fatty acid + H(+). Functionally, catalyzes the release of fatty acids from lysophospholipids. This Schizosaccharomyces pombe (strain 972 / ATCC 24843) (Fission yeast) protein is Probable lysophospholipase 3 (plb3).